Reading from the N-terminus, the 626-residue chain is Protein MICRORCHIDIA 2 (626 aa).

Positions 579–626 form a coiled coil; that stretch reads MRCEEYIKKENETEQTVKSLEKELEEFKSKCAHLALLVDAKKKEMQQA.

It belongs to the MORC ATPase protein family. Homodimer and heterodimer with MORC6. Component of an RNA-directed DNA methylation (RdDM) complex that contains at least MORC6, MORC1/CRT1, MORC2, SWI3D and SUVH9. Binds directly to SUVH9. Mg(2+) is required as a cofactor. The cofactor is Mn(2+).

The protein localises to the nucleus. The protein resides in the endosome. Its function is as follows. Mediator of defense signaling triggered by distinct classes of R proteins. Required during hypersensitive response (HR) that confers disease resistance to turnip crinkle virus (TCV). Contributes to resistance against Pseudomonas syringae and Hyaloperonospora arabidopsidis, at early stages prior to cytosolic calcium ions Ca(2+) accumulation. Required for pathogen-associated molecular pattern (PAMP)-triggered immunity, basal resistance, non-host resistance and systemic acquired resistance (SAR). Involved in RNA-directed DNA methylation (RdDM) as a component of the RdDM machinery and required for gene silencing. May also be involved in the regulation of chromatin architecture to maintain gene silencing. Exhibits ATPase activity. The sequence is that of Protein MICRORCHIDIA 2 from Arabidopsis thaliana (Mouse-ear cress).